Here is a 334-residue protein sequence, read N- to C-terminus: Beta-1,3-N-acetylglucosaminyltransferase radical fringe (334 aa).

Residues 1–6 (MSRVRR) lie on the Cytoplasmic side of the membrane. The helical; Signal-anchor for type II membrane protein transmembrane segment at 7-29 (VLCRACLALAAVLAVLLLLPLPL) threads the bilayer. The Lumenal portion of the chain corresponds to 30 to 334 (PLPLPLPRAP…MKNRGKEAFQ (305 aa)). Arginine 77 contributes to the substrate binding site. The N-linked (GlcNAc...) asparagine glycan is linked to asparagine 116. 2 cysteine pairs are disulfide-bonded: cysteine 117–cysteine 128 and cysteine 146–cysteine 210. Aspartate 150 lines the substrate pocket. Aspartate 151 contacts Mn(2+). The active site involves aspartate 240. Histidine 264 serves as a coordination point for Mn(2+). A disulfide bridge links cysteine 314 with cysteine 323.

The protein belongs to the glycosyltransferase 31 family. Mn(2+) serves as cofactor. Most abundantly expressed in adult brain. Expressed in most neurons of the brain but not in glial cells. Also detected to a lower extent in adult lung and kidney.

It is found in the golgi apparatus membrane. The catalysed reaction is 3-O-(alpha-L-fucosyl)-L-threonyl-[EGF-like domain protein] + UDP-N-acetyl-alpha-D-glucosamine = 3-O-(N-acetyl-beta-D-glucosaminyl-(1-&gt;3)-alpha-L-fucosyl)-L-threonyl-[EGF-like domain protein] + UDP + H(+). It carries out the reaction 3-O-(alpha-L-fucosyl)-L-seryl-[EGF-like domain protein] + UDP-N-acetyl-alpha-D-glucosamine = 3-O-(N-acetyl-beta-D-glucosaminyl-(1-&gt;3)-alpha-L-fucosyl)-L-seryl-[EGF-like domain protein] + UDP + H(+). Functionally, glycosyltransferase that initiates the elongation of O-linked fucose residues attached to EGF-like repeats in the extracellular domain of Notch molecules. Modulates NOTCH1 activity by modifying O-fucose residues at specific EGF-like domains resulting in enhancement of NOTCH1 activation by DLL1 and JAG1. Inhibits Notch signaling in postmitotic neurons of the brain. It may play a role in adult brain and in neurogenesis. It may play a role in limb development. The polypeptide is Beta-1,3-N-acetylglucosaminyltransferase radical fringe (Rattus norvegicus (Rat)).